A 131-amino-acid chain; its full sequence is Large ribosomal subunit protein mL60 (131 aa).

The N-terminal 12 residues, 1-12 (MFGPFKLTSPVA), are a transit peptide targeting the mitochondrion.

It belongs to the mitochondrion-specific ribosomal protein mL60 family. As to quaternary structure, component of the mitochondrial large ribosomal subunit (mt-LSU). Mature yeast 74S mitochondrial ribosomes consist of a small (37S) and a large (54S) subunit. The 37S small subunit contains a 15S ribosomal RNA (15S mt-rRNA) and 34 different proteins. The 54S large subunit contains a 21S rRNA (21S mt-rRNA) and 46 different proteins.

It localises to the mitochondrion. Its function is as follows. Component of the mitochondrial ribosome (mitoribosome), a dedicated translation machinery responsible for the synthesis of mitochondrial genome-encoded proteins, including at least some of the essential transmembrane subunits of the mitochondrial respiratory chain. The mitoribosomes are attached to the mitochondrial inner membrane and translation products are cotranslationally integrated into the membrane. The protein is Large ribosomal subunit protein mL60 (MRPL31) of Saccharomyces cerevisiae (strain ATCC 204508 / S288c) (Baker's yeast).